A 273-amino-acid chain; its full sequence is Type II restriction enzyme HgiCII (273 aa).

The protein belongs to the TdeIII type II restriction endonuclease family.

The enzyme catalyses Endonucleolytic cleavage of DNA to give specific double-stranded fragments with terminal 5'-phosphates.. A P subtype restriction enzyme that recognizes the double-stranded sequence 5'-GGWCC-3' and cleaves after G-1. This Herpetosiphon aurantiacus (Herpetosiphon giganteus) protein is Type II restriction enzyme HgiCII.